The chain runs to 400 residues: uncharacterized protein (400 aa).

A signal peptide spans 1–23 (MSRKLLLALTFLVVLGIAVVVMA).

This is an uncharacterized protein from Archaeoglobus fulgidus (strain ATCC 49558 / DSM 4304 / JCM 9628 / NBRC 100126 / VC-16).